Here is a 210-residue protein sequence, read N- to C-terminus: Natriuretic peptide BM026 (210 aa).

The N-terminal stretch at methionine 1–glycine 26 is a signal peptide. Residues cysteine 83 to cysteine 99 form a natriuretic peptide domain 1 region. Cysteine 83 and cysteine 99 are disulfide-bonded. Over residues glutamate 122–valine 134 the composition is skewed to basic and acidic residues. The interval glutamate 122–alanine 210 is disordered. Residues alanine 140–aspartate 150 show a composition bias toward gly residues. A compositionally biased stretch (basic and acidic residues) spans glutamate 156–histidine 176. The natriuretic peptide domain 2 stretch occupies residues cysteine 166–cysteine 182. Cysteine 166 and cysteine 182 are joined by a disulfide. Over residues glutamine 201–alanine 210 the composition is skewed to polar residues.

It belongs to the natriuretic peptide family. Expressed by the venom gland.

It localises to the secreted. Its function is as follows. Natriuretic peptide that dose-dependently induces the rapid relaxation of rat aortic strips phenylephrine-precontracted. Acts by stimulating cGMP production in a dose-dependent manner (by probably activating NPR1 and/or NPR2). May also show potent hypotensive effects. In Bungarus multicinctus (Many-banded krait), this protein is Natriuretic peptide BM026.